We begin with the raw amino-acid sequence, 135 residues long: Large ribosomal subunit protein eL32 (135 aa).

It belongs to the eukaryotic ribosomal protein eL32 family. Component of the large ribosomal subunit.

It is found in the cytoplasm. Component of the large ribosomal subunit. The ribosome is a large ribonucleoprotein complex responsible for the synthesis of proteins in the cell. In Ictalurus punctatus (Channel catfish), this protein is Large ribosomal subunit protein eL32 (rpl32).